The chain runs to 204 residues: Ciliary microtubule inner protein 7 (204 aa).

It is found in the cell projection. The protein resides in the cilium. The polypeptide is Ciliary microtubule inner protein 7 (Homo sapiens (Human)).